A 527-amino-acid polypeptide reads, in one-letter code: Peptide chain release factor 3 (527 aa).

The 269-residue stretch at 9–277 (AKRRTFAIIS…AVVDWAPKPL (269 aa)) folds into the tr-type G domain. GTP-binding positions include 18–25 (SHPDAGKT), 86–90 (DTPGH), and 140–143 (NKLD).

The protein belongs to the TRAFAC class translation factor GTPase superfamily. Classic translation factor GTPase family. PrfC subfamily.

The protein localises to the cytoplasm. Its function is as follows. Increases the formation of ribosomal termination complexes and stimulates activities of RF-1 and RF-2. It binds guanine nucleotides and has strong preference for UGA stop codons. It may interact directly with the ribosome. The stimulation of RF-1 and RF-2 is significantly reduced by GTP and GDP, but not by GMP. This Stutzerimonas stutzeri (strain A1501) (Pseudomonas stutzeri) protein is Peptide chain release factor 3.